The following is a 323-amino-acid chain: Elongation factor P--(R)-beta-lysine ligase (323 aa).

76-78 (SPE) contacts substrate. ATP is bound by residues 100 to 102 (RNE) and asparagine 109. Residue tyrosine 118 coordinates substrate. 242–243 (EL) contributes to the ATP binding site. Substrate is bound at residue glutamate 249. Glycine 298 serves as a coordination point for ATP.

The protein belongs to the class-II aminoacyl-tRNA synthetase family. EpmA subfamily. Homodimer.

It carries out the reaction D-beta-lysine + L-lysyl-[protein] + ATP = N(6)-((3R)-3,6-diaminohexanoyl)-L-lysyl-[protein] + AMP + diphosphate + H(+). In terms of biological role, with EpmB is involved in the beta-lysylation step of the post-translational modification of translation elongation factor P (EF-P). Catalyzes the ATP-dependent activation of (R)-beta-lysine produced by EpmB, forming a lysyl-adenylate, from which the beta-lysyl moiety is then transferred to the epsilon-amino group of a conserved specific lysine residue in EF-P. The protein is Elongation factor P--(R)-beta-lysine ligase of Pasteurella multocida (strain Pm70).